The following is a 438-amino-acid chain: Cobyrinate a,c-diamide synthase (438 aa).

The GATase cobBQ-type domain maps to 242 to 426; that stretch reads TIAIARDAAF…FHAYFSSCPA (185 aa). Cys-325 acts as the Nucleophile in catalysis.

Belongs to the CobB/CbiA family. The cofactor is Mg(2+).

It catalyses the reaction cob(II)yrinate + 2 L-glutamine + 2 ATP + 2 H2O = cob(II)yrinate a,c diamide + 2 L-glutamate + 2 ADP + 2 phosphate + 2 H(+). It participates in cofactor biosynthesis; adenosylcobalamin biosynthesis; cob(II)yrinate a,c-diamide from sirohydrochlorin (anaerobic route): step 10/10. Catalyzes the ATP-dependent amidation of the two carboxylate groups at positions a and c of cobyrinate, using either L-glutamine or ammonia as the nitrogen source. This chain is Cobyrinate a,c-diamide synthase, found in Herminiimonas arsenicoxydans.